Reading from the N-terminus, the 484-residue chain is Ribosomal RNA small subunit methyltransferase F (484 aa).

S-adenosyl-L-methionine-binding positions include 126-132, E150, D177, and D195; that span reads AAAPGSK. The active-site Nucleophile is the C248.

Belongs to the class I-like SAM-binding methyltransferase superfamily. RsmB/NOP family.

It localises to the cytoplasm. The enzyme catalyses cytidine(1407) in 16S rRNA + S-adenosyl-L-methionine = 5-methylcytidine(1407) in 16S rRNA + S-adenosyl-L-homocysteine + H(+). In terms of biological role, specifically methylates the cytosine at position 1407 (m5C1407) of 16S rRNA. The protein is Ribosomal RNA small subunit methyltransferase F of Pectobacterium carotovorum subsp. carotovorum (strain PC1).